We begin with the raw amino-acid sequence, 349 residues long: Phenylalanine--tRNA ligase alpha subunit (349 aa).

Residue E258 participates in Mg(2+) binding.

This sequence belongs to the class-II aminoacyl-tRNA synthetase family. Phe-tRNA synthetase alpha subunit type 1 subfamily. In terms of assembly, tetramer of two alpha and two beta subunits. Mg(2+) serves as cofactor.

It is found in the cytoplasm. The catalysed reaction is tRNA(Phe) + L-phenylalanine + ATP = L-phenylalanyl-tRNA(Phe) + AMP + diphosphate + H(+). This chain is Phenylalanine--tRNA ligase alpha subunit, found in Rickettsia rickettsii (strain Sheila Smith).